A 281-amino-acid polypeptide reads, in one-letter code: NADPH-dependent 7-cyano-7-deazaguanine reductase (281 aa).

A substrate-binding site is contributed by 87 to 89 (IES). Residue 89–90 (SK) coordinates NADPH. C188 serves as the catalytic Thioimide intermediate. D195 functions as the Proton donor in the catalytic mechanism. Residue 227–228 (HE) coordinates substrate. 256–257 (RG) lines the NADPH pocket. The tract at residues 261 to 281 (INPYRSTEQAKPDHNHRMARQ) is disordered. Residues 268 to 281 (EQAKPDHNHRMARQ) show a composition bias toward basic and acidic residues.

Belongs to the GTP cyclohydrolase I family. QueF type 2 subfamily. Homodimer.

The protein resides in the cytoplasm. The enzyme catalyses 7-aminomethyl-7-carbaguanine + 2 NADP(+) = 7-cyano-7-deazaguanine + 2 NADPH + 3 H(+). The protein operates within tRNA modification; tRNA-queuosine biosynthesis. Its function is as follows. Catalyzes the NADPH-dependent reduction of 7-cyano-7-deazaguanine (preQ0) to 7-aminomethyl-7-deazaguanine (preQ1). This is NADPH-dependent 7-cyano-7-deazaguanine reductase from Vibrio vulnificus (strain CMCP6).